Reading from the N-terminus, the 591-residue chain is Phenylalanine--tRNA ligase beta subunit (591 aa).

The B5 domain maps to 304-380 (LSYREMTVTT…VAFGYNNLIT (77 aa)). Mg(2+)-binding residues include Asp-358, Asp-364, Glu-367, and Asp-368.

This sequence belongs to the phenylalanyl-tRNA synthetase beta subunit family. Type 2 subfamily. As to quaternary structure, tetramer of two alpha and two beta subunits. Requires Mg(2+) as cofactor.

Its subcellular location is the cytoplasm. It catalyses the reaction tRNA(Phe) + L-phenylalanine + ATP = L-phenylalanyl-tRNA(Phe) + AMP + diphosphate + H(+). This is Phenylalanine--tRNA ligase beta subunit from Caenorhabditis elegans.